Reading from the N-terminus, the 630-residue chain is Differentially expressed in FDCP 6 (630 aa).

Tyr-210 carries the phosphotyrosine modification. The 97-residue stretch at 216 to 312 (DVLKQGYLWK…WTAAIQTAIR (97 aa)) folds into the PH domain. An N6-acetyllysine modification is found at Lys-225. Disordered regions lie at residues 318–341 (KTSLHKDLKQKRREQREQRERRRA), 378–418 (LQEE…ELKK), and 552–630 (HPIE…APGN). Composition is skewed to basic and acidic residues over residues 331 to 341 (EQREQRERRRA) and 378 to 392 (LQEEEERRRSQHKEL). Positions 588–606 (WGSQGNRTLSVNSSEQKSL) are enriched in polar residues. A Phosphoserine modification is found at Ser-590. A compositionally biased stretch (basic and acidic residues) spans 620 to 630 (QEEKLDPAPGN).

In terms of assembly, interacts with IRF4, activated RAC1 and F-actin. Both the phosphorylated and non-phosphorylated forms bind phosphatidylinositol 3,4,5-trisphosphate (PtdInsP3). Interacts with ZAP70. Interacts with RAB11A. Tyrosine-phosphorylated by tyrosine-protein kinase LCK in response to T-cell activation. In terms of tissue distribution, thymus.

The protein localises to the cytoplasm. It is found in the cell membrane. It localises to the nucleus. The protein resides in the cytoskeleton. Its subcellular location is the perinuclear region. The protein localises to the cell projection. It is found in the filopodium. In terms of biological role, phosphatidylinositol 3,4,5-trisphosphate-dependent guanine nucleotide exchange factor (GEF) which plays a role in the activation of Rho GTPases RAC1, RhoA and CDC42. Can regulate cell morphology in cooperation with activated RAC1. Involved in immune homeostasis by ensuring proper trafficking and availability of T-cell regulator CTLA-4 at T-cell surface. Plays a role in Th2 (T helper cells) development and/or activation, perhaps by interfering with ZAP70 signaling. Required for optimal T-cell effector function, lymphocyte homeostasis and the prevention of systemic autoimmunity. The protein is Differentially expressed in FDCP 6 (Def6) of Mus musculus (Mouse).